Reading from the N-terminus, the 265-residue chain is MSHGGGGHAAELYPEEQIFAVGIALSLVGCYLANFLSPYGLGMLIGGLLASAACVAGANTVRKVAAYGLGTGVPSIGMVSLGMGTLAAVAGVLIPDYFNLPYLVAPIITLIVSAVIGYIVGRLTVNPVGMKIPIMVRSMTFLSIAGAMALLGFTVAYVGSLEPQKYIDYALNNGMMALAFIAAGMAILHPFNACLGPNESHKRTLTLAVACGFITWFVFSVVKLDIVSIIVSIILWAIVYVKFVKMSFKDACAVLHVPEIPKKEE.

The next 8 membrane-spanning stretches (helical) occupy residues 18-38, 41-61, 75-95, 100-120, 141-161, 175-195, 202-222, and 224-244; these read IFAV…FLSP, LGML…ANTV, SIGM…VLIP, LPYL…GYIV, FLSI…VGSL, MMAL…NACL, KRTL…FSVV, and LDIV…VKFV.

Belongs to the MtrC family. The complex is composed of 8 subunits; MtrA, MtrB, MtrC, MtrD, MtrE, MtrF, MtrG and MtrH.

It localises to the cell membrane. The catalysed reaction is 5-methyl-5,6,7,8-tetrahydromethanopterin + coenzyme M + 2 Na(+)(in) = 5,6,7,8-tetrahydromethanopterin + methyl-coenzyme M + 2 Na(+)(out). It participates in one-carbon metabolism; methanogenesis from CO(2); methyl-coenzyme M from 5,10-methylene-5,6,7,8-tetrahydromethanopterin: step 2/2. Its function is as follows. Part of a complex that catalyzes the formation of methyl-coenzyme M and tetrahydromethanopterin from coenzyme M and methyl-tetrahydromethanopterin. This is an energy-conserving, sodium-ion translocating step. The sequence is that of Tetrahydromethanopterin S-methyltransferase subunit C (mtrC) from Methanocaldococcus jannaschii (strain ATCC 43067 / DSM 2661 / JAL-1 / JCM 10045 / NBRC 100440) (Methanococcus jannaschii).